The following is a 189-amino-acid chain: Protein OPG107 (189 aa).

The Intravirion segment spans residues 1–28; that stretch reads MDKTTLSVNACNLEYVREKAIVGVQAAK. Residues 29–49 traverse the membrane as a helical; Signal-anchor for type III membrane protein segment; it reads TSTLIFFVIILAISALLLWFQ. The Virion surface portion of the chain corresponds to 50–189; it reads TSDNPVFNEL…HWCSDFSNME (140 aa).

Belongs to the orthopoxvirus OPG107 family. As to quaternary structure, part of a stable entry-fusion complex (EFC) which is at least composed of proteins OPG143, OPG147, OPG155, OPG86, OPG94, OPG107, OPG104, and OPG099. Formation of the viral membrane is necessary for the assembly of the complex. Post-translationally, contains two intramolecular disulfide bonds. They are created by the viral disulfide bond formation pathway, a poxvirus-specific pathway that operates on the cytoplasmic side of the MV membranes.

It is found in the virion membrane. It localises to the host endoplasmic reticulum membrane. Envelope protein part of the entry-fusion complex responsible for the virus membrane fusion with host cell membrane during virus entry. Also plays a role in cell-cell fusion (syncytium formation). The polypeptide is Protein OPG107 (OPG107) (Bos taurus (Bovine)).